We begin with the raw amino-acid sequence, 159 residues long: MNRVLYPGTFDPITKGHGDLIERASRLFDHVIIAVAASPKKNPLFSLEQRVALAQEVTKHLPNVEVVGFSTLLAHFVKEQKANVFLRGLRAVSDFEYEFQLANMNRQLAPDVESMFLTPSEKYSFISSTLVREIAALGGDISKFVHPAVADALAERFKR.

T9 serves as a coordination point for substrate. ATP is bound by residues 9 to 10 (TF) and H17. 3 residues coordinate substrate: K41, L73, and R87. ATP is bound by residues 88–90 (GLR), E98, and 123–129 (YSFISST).

It belongs to the bacterial CoaD family. Homohexamer. The cofactor is Mg(2+).

It is found in the cytoplasm. The enzyme catalyses (R)-4'-phosphopantetheine + ATP + H(+) = 3'-dephospho-CoA + diphosphate. Its pathway is cofactor biosynthesis; coenzyme A biosynthesis; CoA from (R)-pantothenate: step 4/5. Reversibly transfers an adenylyl group from ATP to 4'-phosphopantetheine, yielding dephospho-CoA (dPCoA) and pyrophosphate. This Pseudomonas aeruginosa (strain LESB58) protein is Phosphopantetheine adenylyltransferase.